Consider the following 572-residue polypeptide: NADP-dependent malic enzyme (572 aa).

Position 1 is an N-acetylmethionine (methionine 1). The active-site Proton donor is the tyrosine 102. Arginine 155 lines the NADP(+) pocket. The active-site Proton acceptor is lysine 173. Residues glutamate 245, aspartate 246, and aspartate 269 each contribute to the a divalent metal cation site. Residues aspartate 269 and 301–318 (GAGEAALGIAHLIVMAME) contribute to the NADP(+) site. At serine 336 the chain carries Phosphoserine. Asparagine 408 lines the NADP(+) pocket.

This sequence belongs to the malic enzymes family. As to quaternary structure, homotetramer. Mg(2+) is required as a cofactor. The cofactor is Mn(2+). Ubiquitous. Up-regulated by 3,5,3'-triiodo-L-thyronine in the liver, kidney and heart.

Its subcellular location is the cytoplasm. It catalyses the reaction (S)-malate + NADP(+) = pyruvate + CO2 + NADPH. The catalysed reaction is oxaloacetate + H(+) = pyruvate + CO2. Functionally, catalyzes the oxidative decarboxylation of (S)-malate in the presence of NADP(+) and divalent metal ions, and decarboxylation of oxaloacetate. The protein is NADP-dependent malic enzyme (Me1) of Rattus norvegicus (Rat).